The sequence spans 110 residues: Snake venom vascular endothelial growth factor toxin (110 aa).

Residue glutamine 1 is modified to Pyrrolidone carboxylic acid. Disulfide bonds link cysteine 14–cysteine 56, cysteine 45–cysteine 91, and cysteine 49–cysteine 93.

It belongs to the PDGF/VEGF growth factor family. Snake venom VEGF subfamily. As to quaternary structure, homodimer; disulfide-linked. In terms of tissue distribution, expressed by the venom gland.

The protein localises to the secreted. Snake venom VEGFs that may contribute to venom dispersion and prey subjugation by inducing vascular permeability and hypotension. This protein potently stimulates dermal human microvascular endothelial cell (dHMVEC) proliferation in a VEGFR-2 dependent manner. This stimulatory effect is correlated with activation of the MAPK Erk1/2 signaling pathway. It also appears to be a chemoattractant for migration of these cells and stimulates their radial migration in a collagen gel. In vivo, it induces angiogenesis in a Japanese quail assay. This pro-angiogenic effect may also be related to its interaction with VEGFR-2. In addition, it may induce an increase in capillary permeability after intradermal injection, as well as a drastic hypotensive effect after intravenous injection. The hypotension is mediated by nitric oxide (NO), which is produced by VEGF-activated endothelium NO synthase. This Daboia palaestinae (Palestine viper) protein is Snake venom vascular endothelial growth factor toxin.